Here is a 522-residue protein sequence, read N- to C-terminus: Lysine--tRNA ligase (522 aa).

A 'HIGH' region motif is present at residues 44–52 (PSGLPHIGT). The 'KMSKS' region motif lies at 290-294 (KISKS). An ATP-binding site is contributed by Lys293.

It belongs to the class-I aminoacyl-tRNA synthetase family.

The protein localises to the cytoplasm. It catalyses the reaction tRNA(Lys) + L-lysine + ATP = L-lysyl-tRNA(Lys) + AMP + diphosphate. The polypeptide is Lysine--tRNA ligase (Rickettsia africae (strain ESF-5)).